Reading from the N-terminus, the 107-residue chain is uncharacterized protein (107 aa).

Disordered stretches follow at residues 51–75 (VQRSRLRRKGPINGNQGSAIPTQSA) and 88–107 (NPTPRGLSRLAASVPTAPEP). A compositionally biased stretch (polar residues) spans 63–75 (NGNQGSAIPTQSA).

This is an uncharacterized protein from Fowl adenovirus A serotype 1 (strain CELO / Phelps) (FAdV-1).